The sequence spans 608 residues: Dextranase (608 aa).

The first 19 residues, 1–19 (MATMLKLLALTLAISESAI), serve as a signal peptide directing secretion. Positions 20-34 (GAVMHPPGNSHPGTH) are excised as a propeptide. N-linked (GlcNAc...) asparagine glycans are attached at residues Asn-39, Asn-571, and Asn-574.

It belongs to the glycosyl hydrolase 49 family. N-glycosylated.

It localises to the secreted. The catalysed reaction is Endohydrolysis of (1-&gt;6)-alpha-D-glucosidic linkages in dextran.. The polypeptide is Dextranase (DEX) (Talaromyces minioluteus (Filamentous fungus)).